We begin with the raw amino-acid sequence, 299 residues long: Fibrinogen silencer-binding protein (299 aa).

K94 participates in a covalent cross-link: Glycyl lysine isopeptide (Lys-Gly) (interchain with G-Cter in SUMO2).

In terms of assembly, interacts with APBA1 (via PDZ 1 and 2 domains). As to expression, expressed in multiple tissues including brain.

The protein localises to the nucleus. Functionally, transcriptional repressor that down-regulates the expression of the fibrinogen gamma chain. Represses transcription of GSK3B gene promoter via its interaction with APBA1. The polypeptide is Fibrinogen silencer-binding protein (FSBP) (Homo sapiens (Human)).